Consider the following 118-residue polypeptide: Cell division topological specificity factor (118 aa).

The segment at 86–118 (RSQAKAVSSQENGASSQEAVSSQESVSTPGAME) is disordered. Low complexity predominate over residues 99–112 (ASSQEAVSSQESVS).

It belongs to the MinE family.

In terms of biological role, prevents the cell division inhibition by proteins MinC and MinD at internal division sites while permitting inhibition at polar sites. This ensures cell division at the proper site by restricting the formation of a division septum at the midpoint of the long axis of the cell. The chain is Cell division topological specificity factor from Prochlorococcus marinus (strain MIT 9313).